Reading from the N-terminus, the 448-residue chain is Exodeoxyribonuclease 7 large subunit (448 aa).

It belongs to the XseA family. In terms of assembly, heterooligomer composed of large and small subunits.

Its subcellular location is the cytoplasm. The enzyme catalyses Exonucleolytic cleavage in either 5'- to 3'- or 3'- to 5'-direction to yield nucleoside 5'-phosphates.. Its function is as follows. Bidirectionally degrades single-stranded DNA into large acid-insoluble oligonucleotides, which are then degraded further into small acid-soluble oligonucleotides. This Bacillus pumilus (strain SAFR-032) protein is Exodeoxyribonuclease 7 large subunit.